We begin with the raw amino-acid sequence, 493 residues long: 3-octaprenyl-4-hydroxybenzoate carboxy-lyase (493 aa).

Mn(2+) is bound at residue N172. Prenylated FMN-binding positions include 175 to 177 (IYR), 189 to 191 (RWL), and 194 to 195 (RG). E238 is a Mn(2+) binding site. Catalysis depends on D287, which acts as the Proton donor.

The protein belongs to the UbiD family. Homohexamer. The cofactor is prenylated FMN. Mn(2+) is required as a cofactor.

It localises to the cell membrane. The catalysed reaction is a 4-hydroxy-3-(all-trans-polyprenyl)benzoate + H(+) = a 2-(all-trans-polyprenyl)phenol + CO2. Its pathway is cofactor biosynthesis; ubiquinone biosynthesis. Catalyzes the decarboxylation of 3-octaprenyl-4-hydroxy benzoate to 2-octaprenylphenol, an intermediate step in ubiquinone biosynthesis. This chain is 3-octaprenyl-4-hydroxybenzoate carboxy-lyase, found in Shewanella baltica (strain OS155 / ATCC BAA-1091).